A 673-amino-acid polypeptide reads, in one-letter code: UvrABC system protein B (673 aa).

The 389-residue stretch at 26–414 folds into the Helicase ATP-binding domain; sequence EGLEDGLAHQ…GDEVVDQVVR (389 aa). Position 39-46 (39-46) interacts with ATP; the sequence is GVTGSGKT. Residues 92–115 carry the Beta-hairpin motif; it reads YYDYYQPEAYVPSSDTFIEKDASI. Residues 431–597 form the Helicase C-terminal domain; the sequence is QVDDLLSEIR…GLNKKVVDIL (167 aa). The region spanning 633–668 is the UVR domain; the sequence is QQKIHELEGQMMQHAQNLEFEEAAQIRDQLHQLREL.

Belongs to the UvrB family. Forms a heterotetramer with UvrA during the search for lesions. Interacts with UvrC in an incision complex.

The protein resides in the cytoplasm. The UvrABC repair system catalyzes the recognition and processing of DNA lesions. A damage recognition complex composed of 2 UvrA and 2 UvrB subunits scans DNA for abnormalities. Upon binding of the UvrA(2)B(2) complex to a putative damaged site, the DNA wraps around one UvrB monomer. DNA wrap is dependent on ATP binding by UvrB and probably causes local melting of the DNA helix, facilitating insertion of UvrB beta-hairpin between the DNA strands. Then UvrB probes one DNA strand for the presence of a lesion. If a lesion is found the UvrA subunits dissociate and the UvrB-DNA preincision complex is formed. This complex is subsequently bound by UvrC and the second UvrB is released. If no lesion is found, the DNA wraps around the other UvrB subunit that will check the other stand for damage. The polypeptide is UvrABC system protein B (Salmonella paratyphi A (strain ATCC 9150 / SARB42)).